Consider the following 364-residue polypeptide: MQDRQKAQDYRALLLADTPLIDVRAPIEFEQGAMPGAINLPLMMDDERAAVGTCYKRQGADAALALGHRLVCGDIRQQRLEAWKAAYQRFPNGYLCCARGGQRSHIVQRWLQETGIDCPLIEGGYKALRQTAIQATWQLAQKPILLIGGCTGSGKTQLVRQQPNGVDLEGLARHRGSSFGRTLNPQLSQASFENKLAVELLKINARQTLKRWVLEDEGRTIGANHLPECLRERMAQAPIAVVEDPFALRLERLREEYFIRMHHDFTHAYGDEAGWQAYSEYLHHGLFAIRRRLGLQRFAELTDTLDRALAEQLSSGSTDGHMAWLVPLLNEYYDPMYRYQLEKKAANIVFRGPWQDVANWLKAQ.

Positions 14 to 137 (LLADTPLIDV…LRQTAIQATW (124 aa)) constitute a Rhodanese domain. The S-selanylcysteine intermediate role is filled by Cys97.

Belongs to the SelU family. As to quaternary structure, monomer.

It catalyses the reaction 5-methylaminomethyl-2-thiouridine(34) in tRNA + selenophosphate + (2E)-geranyl diphosphate + H2O + H(+) = 5-methylaminomethyl-2-selenouridine(34) in tRNA + (2E)-thiogeraniol + phosphate + diphosphate. The catalysed reaction is 5-methylaminomethyl-2-thiouridine(34) in tRNA + (2E)-geranyl diphosphate = 5-methylaminomethyl-S-(2E)-geranyl-thiouridine(34) in tRNA + diphosphate. It carries out the reaction 5-methylaminomethyl-S-(2E)-geranyl-thiouridine(34) in tRNA + selenophosphate + H(+) = 5-methylaminomethyl-2-(Se-phospho)selenouridine(34) in tRNA + (2E)-thiogeraniol. The enzyme catalyses 5-methylaminomethyl-2-(Se-phospho)selenouridine(34) in tRNA + H2O = 5-methylaminomethyl-2-selenouridine(34) in tRNA + phosphate. Functionally, involved in the post-transcriptional modification of the uridine at the wobble position (U34) of tRNA(Lys), tRNA(Glu) and tRNA(Gln). Catalyzes the conversion of 2-thiouridine (S2U-RNA) to 2-selenouridine (Se2U-RNA). Acts in a two-step process involving geranylation of 2-thiouridine (S2U) to S-geranyl-2-thiouridine (geS2U) and subsequent selenation of the latter derivative to 2-selenouridine (Se2U) in the tRNA chain. The protein is tRNA 2-selenouridine synthase of Salmonella choleraesuis (strain SC-B67).